A 643-amino-acid chain; its full sequence is Probable potassium transport system protein Kup (643 aa).

A compositionally biased stretch (basic and acidic residues) spans Met1–Ile12. The disordered stretch occupies residues Met1–His20. The next 12 membrane-spanning stretches (helical) occupy residues Leu28–Leu48, Ala65–Leu85, Trp121–Thr141, Pro158–Phe178, Gly187–Ile207, Gly224–Leu244, Trp268–Leu288, Leu301–Ala321, Ile358–Phe378, Leu384–Tyr404, Pro415–Ala435, and Leu440–Thr460.

The protein belongs to the HAK/KUP transporter (TC 2.A.72) family.

Its subcellular location is the cell inner membrane. It catalyses the reaction K(+)(in) + H(+)(in) = K(+)(out) + H(+)(out). In terms of biological role, transport of potassium into the cell. Likely operates as a K(+):H(+) symporter. The sequence is that of Probable potassium transport system protein Kup from Chlorobium luteolum (strain DSM 273 / BCRC 81028 / 2530) (Pelodictyon luteolum).